The following is a 151-amino-acid chain: MKTLIVEDNPKKRASLVEYYSSEFPSDDLEVTSALISGLRVARDTKPEFIILDMTLPNYSPDENKGSRIELMPFAGREFVMRVNRMSIKTKVIIVSMFETFGVAPRLITLNSLDAELRDRYPNVFVEAVHYSQAQADWKTAIKNARLSLDR.

Residues 2-133 (KTLIVEDNPK…VFVEAVHYSQ (132 aa)) form the Response regulatory domain. At D53 the chain carries 4-aspartylphosphate.

This is an uncharacterized protein from Sinorhizobium fredii (strain NBRC 101917 / NGR234).